Reading from the N-terminus, the 321-residue chain is Glucokinase (321 aa).

8-13 (GDVGGT) is an ATP binding site.

This sequence belongs to the bacterial glucokinase family.

Its subcellular location is the cytoplasm. It carries out the reaction D-glucose + ATP = D-glucose 6-phosphate + ADP + H(+). This Salmonella paratyphi B (strain ATCC BAA-1250 / SPB7) protein is Glucokinase.